The following is a 429-amino-acid chain: Ribosomal RNA small subunit methyltransferase B (429 aa).

S-adenosyl-L-methionine contacts are provided by residues 254-260, Asp-277, Asp-303, and Asp-322; that span reads CAAPGGK. Cys-375 serves as the catalytic Nucleophile.

This sequence belongs to the class I-like SAM-binding methyltransferase superfamily. RsmB/NOP family.

The protein resides in the cytoplasm. The catalysed reaction is cytidine(967) in 16S rRNA + S-adenosyl-L-methionine = 5-methylcytidine(967) in 16S rRNA + S-adenosyl-L-homocysteine + H(+). Specifically methylates the cytosine at position 967 (m5C967) of 16S rRNA. The protein is Ribosomal RNA small subunit methyltransferase B of Cronobacter sakazakii (strain ATCC BAA-894) (Enterobacter sakazakii).